The sequence spans 262 residues: Cell division protein ZapD (262 aa).

The protein belongs to the ZapD family. As to quaternary structure, interacts with FtsZ.

The protein resides in the cytoplasm. Functionally, cell division factor that enhances FtsZ-ring assembly. Directly interacts with FtsZ and promotes bundling of FtsZ protofilaments, with a reduction in FtsZ GTPase activity. This Nitrosomonas europaea (strain ATCC 19718 / CIP 103999 / KCTC 2705 / NBRC 14298) protein is Cell division protein ZapD.